The following is a 245-amino-acid chain: Extracellular protein ARB_04177 (245 aa).

It is found in the secreted. In Arthroderma benhamiae (strain ATCC MYA-4681 / CBS 112371) (Trichophyton mentagrophytes), this protein is Extracellular protein ARB_04177.